We begin with the raw amino-acid sequence, 2019 residues long: Sodium channel protein type 5 subunit alpha (2019 aa).

Topologically, residues 1 to 129 (MANFLLPRGT…VRRAAVKILV (129 aa)) are cytoplasmic. The tract at residues 27 to 66 (RMAEKQARGSATSQESREGLPEEEAPRPQLDLQASKKLPD) is disordered. Ser36 carries the phosphoserine modification. Thr38 carries the post-translational modification Phosphothreonine. The span at 41–52 (ESREGLPEEEAP) shows a compositional bias: basic and acidic residues. The stretch at 113 to 420 (VLSPFHPVRR…VVAMAYEEQN (308 aa)) is one I repeat. Residues 130 to 149 (HSLFSMLIMCTILTNCVFMA) form a helical membrane-spanning segment. Over 150 to 157 (QHDPPPWT) the chain is Extracellular. The chain crosses the membrane as a helical span at residues 158 to 179 (KYVEYTFTAIYTFESLVKILAR). Over 180-188 (GFCLHAFTF) the chain is Cytoplasmic. A helical membrane pass occupies residues 189 to 209 (LRDPWNWLDFSVIVMAYTTEF). The Extracellular portion of the chain corresponds to 210-216 (VDLGNVS). N-linked (GlcNAc...) asparagine glycosylation occurs at Asn214. The helical transmembrane segment at 217 to 236 (ALRTFRVLRALKTISVISGL) threads the bilayer. At 237–249 (KTIVGALIQSVKK) the chain is on the cytoplasmic side. A helical membrane pass occupies residues 250–272 (LADVMVLTVFCLSVFALIGLQLF). Over 273–357 (MGNLRHKCVR…PDHGYTSFDS (85 aa)) the chain is Extracellular. Cys280 and Cys335 form a disulfide bridge. Residues Asn283, Asn288, Asn291, Asn318, and Asn328 are each glycosylated (N-linked (GlcNAc...) asparagine). The pore-forming intramembrane region spans 358–378 (FAWAFLALFRLMTQDCWERLY). Residues 379-386 (QQTLRSAG) lie on the Extracellular side of the membrane. The chain crosses the membrane as a helical span at residues 387 to 413 (KIYMIFFMLVIFLGSFYLVNLILAVVA). Residues 414-719 (MAYEEQNQAT…VKFVVMDPFA (306 aa)) lie on the Cytoplasmic side of the membrane. Ser457, Ser460, Ser483, and Ser484 each carry phosphoserine. Disordered regions lie at residues 461-575 (LEMS…TQGQ) and 610-647 (EATS…TPQA). Thr486 carries the post-translational modification Phosphothreonine. Over residues 491 to 503 (DDRLPKSDSEDGP) the composition is skewed to basic and acidic residues. Phosphoserine is present on residues Ser497 and Ser510. Polar residues predominate over residues 507–528 (NQLSLTHGLSRTSMRPRSSRGS). Dimethylated arginine; alternate is present on Arg526. Position 526 is an omega-N-methylarginine; alternate (Arg526). Phosphoserine occurs at positions 539 and 571. 2 positions are modified to phosphoserine: Ser664 and Ser667. Residues 699-971 (CCPLWMSIKQ…QLALARIQRG (273 aa)) form an II repeat. A helical membrane pass occupies residues 720 to 737 (DLTITMCIVLNTLFMALE). The Extracellular segment spans residues 738–746 (HYNMTAEFE). Asn740 carries an N-linked (GlcNAc...) asparagine glycan. The chain crosses the membrane as a helical span at residues 747-769 (EMLQVGNLVFTGIFTAEMTFKII). Topologically, residues 770–775 (ALDPYY) are cytoplasmic. Residues 776–796 (YFQQGWNIFDSIIVILSLMEL) form a helical membrane-spanning segment. Over 797-806 (GLSRMGNLSV) the chain is Extracellular. An N-linked (GlcNAc...) asparagine glycan is attached at Asn803. A helical transmembrane segment spans residues 807-821 (LRSFRLLRVFKLAKS). Residues 822 to 838 (WPTLNTLIKIIGNSVGA) lie on the Cytoplasmic side of the membrane. Residues 839–860 (LGNLTLVLAIIVFIFAVVGMQL) form a helical membrane-spanning segment. Topologically, residues 861-886 (FGKNYSELRHRISDSGLLPRWHMMDF) are extracellular. An N-linked (GlcNAc...) asparagine glycan is attached at Asn864. The segment at residues 887 to 905 (FHAFLIIFRILCGEWIETM) is an intramembrane region (pore-forming). At 906 to 914 (WDCMEVSGQ) the chain is on the extracellular side. A disulfide bridge connects residues Cys908 and Cys917. Residues 915–943 (SLCLLVFLLVMVIGNLVVLNLFLALLLSS) traverse the membrane as a helical segment. Topologically, residues 944-1205 (FSADNLTAPD…LRKTCYRIVE (262 aa)) are cytoplasmic. Residues 1000–1144 (HSQLPSCIAA…EDSYSEGSTA (145 aa)) form a disordered region. A compositionally biased stretch (basic and acidic residues) spans 1017-1036 (EVEKAPPARKETRFEEDKRP). A compositionally biased stretch (acidic residues) spans 1056 to 1075 (SDTDDQEEDEENSLGTEEEE). Over residues 1098-1115 (SQVSETTSSEAEASTSQA) the composition is skewed to low complexity. Residues 1189–1503 (PGKVWWRLRK…KKYYNAMKKL (315 aa)) form an III repeat. Residues 1206 to 1227 (HSWFETFIIFMILLSSGALAFE) traverse the membrane as a helical segment. Residues 1228 to 1238 (DIYLEERKTIK) are Extracellular-facing. Residues 1239 to 1261 (VLLEYADKMFTYVFVLEMLLKWV) traverse the membrane as a helical segment. The Cytoplasmic segment spans residues 1262-1270 (AYGFKKYFT). Residues 1271 to 1293 (NAWCWLDFLIVDVSLVSLVANTL) form a helical membrane-spanning segment. The Extracellular portion of the chain corresponds to 1294 to 1299 (GFAEMG). The helical transmembrane segment at 1300–1319 (PIKSLRTLRALRPLRALSRF) threads the bilayer. Residues 1320–1332 (EGMRVVVNALVGA) are Cytoplasmic-facing. The chain crosses the membrane as a helical span at residues 1333 to 1357 (IPSIMNVLLVCLIFWLIFSIMGVNL). At 1358 to 1402 (FAGKFGRCINQTEGDLPLNYTIVNNKSECESFNVTGELYWTKVKV) the chain is on the extracellular side. 4 N-linked (GlcNAc...) asparagine glycosylation sites follow: Asn1367, Asn1376, Asn1382, and Asn1390. The pore-forming intramembrane region spans 1403 to 1424 (NFDNVGAGYLALLQVATFKGWM). At 1425-1447 (DIMYAAVDSRGYEEQPQWEDNLY) the chain is on the extracellular side. A helical transmembrane segment spans residues 1448–1472 (MYIYFVVFIIFGSFFTLNLFIGVII). At 1473-1530 (DNFNQQKKKLGGQDIFMTEEQKKYYNAMKKLGSKKPQKPIPRPLNKYQGFIFDIVTKQ) the chain is on the cytoplasmic side. At Ser1505 the chain carries Phosphoserine; by PKC. Residues 1512–1809 (IPRPLNKYQG…WEKFDPEATQ (298 aa)) form an IV repeat. Residues 1531-1549 (AFDVTIMFLICLNMVTMMV) form a helical membrane-spanning segment. At 1550–1560 (ETDDQSPEKVN) the chain is on the extracellular side. A helical transmembrane segment spans residues 1561–1582 (ILAKINLLFVAIFTGECIVKMA). The Cytoplasmic portion of the chain corresponds to 1583-1591 (ALRHYYFTN). A helical transmembrane segment spans residues 1592-1614 (SWNIFDFVVVILSIVGTVLSDII). Topologically, residues 1615–1621 (QKYFFSP) are extracellular. The helical transmembrane segment at 1622-1642 (TLFRVIRLARIGRILRLIRGA) threads the bilayer. Residues 1643–1652 (KGIRTLLFAL) lie on the Cytoplasmic side of the membrane. Residues 1653 to 1681 (MMSLPALFNIGLLLFLVMFIYSIFGMANF) form a helical membrane-spanning segment. Over 1682-1699 (AYVKWEAGIDDMFNFQTF) the chain is Extracellular. Positions 1700–1716 (ANSMLCLFQITTSAGWD) form an intramembrane region, pore-forming. The Extracellular portion of the chain corresponds to 1717–1747 (GLLSPILNTGPPYCDPNLPNSNGSRGNCGSP). Residues 1748-1773 (AVGILFFTTYIIISFLIVVNMYIAII) traverse the membrane as a helical segment. Over 1774–2019 (LENFSVATEE…SPDRDRESIV (246 aa)) the chain is Cytoplasmic. An interaction with FGF13 region spans residues 1841–1903 (DLPMVSGDRI…ITTTLRRKHE (63 aa)). Positions 1903 to 1932 (EEVSATVIQRAFRRHLLQRSVKHASFLFRQ) constitute an IQ domain. Residues 1963-1982 (SGPLSSSSISSTSFPPSYDS) show a composition bias toward low complexity. A disordered region spans residues 1963–2019 (SGPLSSSSISSTSFPPSYDSVTRATSDNLPVRASDYSRSEDLADFPPSPDRDRESIV). An interaction with NEDD4, NEDD4L and WWP2 region spans residues 1977–1980 (PPSY).

This sequence belongs to the sodium channel (TC 1.A.1.10) family. Nav1.5/SCN5A subfamily. As to quaternary structure, cannot form the same regulatory interactions with beta subunits as other Navs do. Interacts with the PDZ domain of the syntrophin SNTA1, SNTB1 and SNTB2. Interacts with NEDD4, NEDD4L, WWP2 and GPD1L. Interacts with CALM. Interacts with FGF13; the interaction is direct and may regulate SNC5A density at membranes and function. Interacts with FGF12 and FGF14. Interacts with ANK3. Interacts with PKP2 (via N-terminus). Interacts with TMEM233. Interacts with XIRP2; the interaction is required for normal action potential configuration in the heart. Phosphorylation at Ser-1505 by PKC in a highly conserved cytoplasmic loop slows inactivation of the sodium channel and reduces peak sodium currents. Regulated through phosphorylation by CaMK2D. Post-translationally, ubiquitinated by NEDD4L; which promotes its endocytosis. Does not seem to be ubiquitinated by NEDD4 or WWP2. In terms of processing, lacks the cysteine which covalently binds the conotoxin GVIIJ. This cysteine (position 868) is speculated in other sodium channel subunits alpha to be implied in covalent binding with the sodium channel subunit beta-2 or beta-4. N-glycosylated at Asn-318, probably hinders potential interaction with regulatory subunits. In terms of tissue distribution, expressed in the myocardium (at protein level).

The protein localises to the cell membrane. The protein resides in the cytoplasm. It is found in the perinuclear region. Its subcellular location is the sarcolemma. It localises to the T-tubule. The protein localises to the cell junction. It catalyses the reaction Na(+)(in) = Na(+)(out). Channel inactivation is regulated by intracellular calcium levels. It is a tetrodotoxin-resistant voltage-gated Na(+) channel (Nav). In terms of biological role, pore-forming subunit of Nav1.5, a voltage-gated sodium (Nav) channel that directly mediates the depolarizing phase of action potentials in excitable membranes. Navs, also called VGSCs (voltage-gated sodium channels) or VDSCs (voltage-dependent sodium channels), operate by switching between closed and open conformations depending on the voltage difference across the membrane. In the open conformation they allow Na(+) ions to selectively pass through the pore, along their electrochemical gradient. The influx of Na(+) ions provokes membrane depolarization, initiating the propagation of electrical signals throughout cells and tissues. Nav1.5 is the predominant sodium channel expressed in myocardial cells and it is responsible for the initial upstroke of the action potential in cardiac myocytes, thereby initiating the heartbeat. Required for normal electrical conduction including formation of the infranodal ventricular conduction system and normal action potential configuration, as a result of its interaction with XIRP2. The sequence is that of Sodium channel protein type 5 subunit alpha from Mus musculus (Mouse).